Consider the following 249-residue polypeptide: Isoprenyl transferase (249 aa).

Residue D29 is part of the active site. D29 contacts Mg(2+). Residues G30–R33, W34, R42, H46, and S74–E76 contribute to the substrate site. N77 serves as the catalytic Proton acceptor. Residues W78, R80, R197, and R203–S205 each bind substrate. Residue E216 coordinates Mg(2+).

The protein belongs to the UPP synthase family. Homodimer. Mg(2+) serves as cofactor.

In terms of biological role, catalyzes the condensation of isopentenyl diphosphate (IPP) with allylic pyrophosphates generating different type of terpenoids. This is Isoprenyl transferase from Gloeobacter violaceus (strain ATCC 29082 / PCC 7421).